Here is a 230-residue protein sequence, read N- to C-terminus: UPF0758 protein plu4865 (230 aa).

The region spanning 108–230 (IMSSPSVTQE…CVSFAERGWI (123 aa)) is the MPN domain. Residues histidine 179, histidine 181, and aspartate 192 each coordinate Zn(2+). The JAMM motif signature appears at 179–192 (HNHPSGHAEPSLAD).

It belongs to the UPF0758 family. YicR subfamily.

The chain is UPF0758 protein plu4865 from Photorhabdus laumondii subsp. laumondii (strain DSM 15139 / CIP 105565 / TT01) (Photorhabdus luminescens subsp. laumondii).